We begin with the raw amino-acid sequence, 216 residues long: Small ribosomal subunit protein uS3 (216 aa).

The 73-residue stretch at 39 to 111 folds into the KH type-2 domain; sequence IYKFFDKLVR…DINLQVSLLK (73 aa).

The protein belongs to the universal ribosomal protein uS3 family. Part of the 30S ribosomal subunit. Forms a tight complex with proteins S10 and S14.

Its function is as follows. Binds the lower part of the 30S subunit head. Binds mRNA in the 70S ribosome, positioning it for translation. The polypeptide is Small ribosomal subunit protein uS3 (Mycoplasmopsis agalactiae (strain NCTC 10123 / CIP 59.7 / PG2) (Mycoplasma agalactiae)).